A 502-amino-acid chain; its full sequence is Putative diacyglycerol O-acyltransferase Rv1760 (502 aa).

The active-site Proton acceptor is histidine 174.

Belongs to the long-chain O-acyltransferase family.

It carries out the reaction an acyl-CoA + a 1,2-diacyl-sn-glycerol = a triacyl-sn-glycerol + CoA. The enzyme catalyses di-(9Z)-octadecenoylglycerol + (9Z)-octadecenoyl-CoA = 1,2,3-tri-(9Z-octadecenoyl)-glycerol + CoA. The protein operates within glycerolipid metabolism; triacylglycerol biosynthesis. Functionally, catalyzes the terminal and only committed step in triacylglycerol synthesis by using diacylglycerol and fatty acyl CoA as substrates. Required for storage lipid synthesis. Its function is as follows. Upon expression in E.coli functions weakly as a triacylglycerol synthase, making triacylglycerol (TG) from diolein and long-chain fatty acyl-CoA. Has very weak wax synthase activity, incorporating palmityl alcohol into wax esters in the presence of palmitoyl-CoA. This is Putative diacyglycerol O-acyltransferase Rv1760 from Mycobacterium tuberculosis (strain ATCC 25618 / H37Rv).